The primary structure comprises 310 residues: Acetyl-coenzyme A carboxylase carboxyl transferase subunit beta, chloroplastic (310 aa).

The 264-residue stretch at 47–310 (LWARCDNCGN…LYLSVPYNKN (264 aa)) folds into the CoA carboxyltransferase N-terminal domain. Cys-51, Cys-54, Cys-70, and Cys-73 together coordinate Zn(2+). The C4-type zinc finger occupies 51-73 (CDNCGNMLYVKFLKQNRSVCEEC).

Belongs to the AccD/PCCB family. As to quaternary structure, acetyl-CoA carboxylase is a heterohexamer composed of biotin carboxyl carrier protein, biotin carboxylase and 2 subunits each of ACCase subunit alpha and ACCase plastid-coded subunit beta (accD). It depends on Zn(2+) as a cofactor.

It localises to the plastid. The protein localises to the chloroplast stroma. The enzyme catalyses N(6)-carboxybiotinyl-L-lysyl-[protein] + acetyl-CoA = N(6)-biotinyl-L-lysyl-[protein] + malonyl-CoA. It participates in lipid metabolism; malonyl-CoA biosynthesis; malonyl-CoA from acetyl-CoA: step 1/1. Functionally, component of the acetyl coenzyme A carboxylase (ACC) complex. Biotin carboxylase (BC) catalyzes the carboxylation of biotin on its carrier protein (BCCP) and then the CO(2) group is transferred by the transcarboxylase to acetyl-CoA to form malonyl-CoA. The sequence is that of Acetyl-coenzyme A carboxylase carboxyl transferase subunit beta, chloroplastic from Adiantum capillus-veneris (Maidenhair fern).